We begin with the raw amino-acid sequence, 96 residues long: Transmembrane protein PMIS2 (96 aa).

Helical transmembrane passes span 31-51 and 76-96; these read VMLA…AIYF and WFNM…VLVL.

It belongs to the CD225/Dispanin family. Specifically expressed in testis.

Its subcellular location is the membrane. Functionally, may play a role in spermatozoa mobility. This Mus musculus (Mouse) protein is Transmembrane protein PMIS2.